Here is a 191-residue protein sequence, read N- to C-terminus: Fe/S biogenesis protein NfuA (191 aa).

Residues Cys149 and Cys152 each coordinate [4Fe-4S] cluster.

It belongs to the NfuA family. Homodimer. Requires [4Fe-4S] cluster as cofactor.

In terms of biological role, involved in iron-sulfur cluster biogenesis. Binds a 4Fe-4S cluster, can transfer this cluster to apoproteins, and thereby intervenes in the maturation of Fe/S proteins. Could also act as a scaffold/chaperone for damaged Fe/S proteins. This is Fe/S biogenesis protein NfuA from Pectobacterium atrosepticum (strain SCRI 1043 / ATCC BAA-672) (Erwinia carotovora subsp. atroseptica).